The chain runs to 465 residues: Mitochondrial distribution and morphology protein 10 (465 aa).

The protein belongs to the MDM10 family. In terms of assembly, component of the ER-mitochondria encounter structure (ERMES) or MDM complex, composed of MMM1, MDM10, MDM12 and MDM34. Associates with the mitochondrial outer membrane sorting assembly machinery SAM(core) complex.

The protein resides in the mitochondrion outer membrane. Its function is as follows. Component of the ERMES/MDM complex, which serves as a molecular tether to connect the endoplasmic reticulum and mitochondria. Components of this complex are involved in the control of mitochondrial shape and protein biogenesis and may function in phospholipid exchange. MDM10 is involved in the late assembly steps of the general translocase of the mitochondrial outer membrane (TOM complex). Functions in the TOM40-specific route of the assembly of outer membrane beta-barrel proteins, including the association of TOM40 with the receptor TOM22 and small TOM proteins. Can associate with the SAM(core) complex as well as the MDM12-MMM1 complex, both involved in late steps of the major beta-barrel assembly pathway, that is responsible for biogenesis of all outer membrane beta-barrel proteins. May act as a switch that shuttles between both complexes and channels precursor proteins into the TOM40-specific pathway. Plays a role in mitochondrial morphology and in the inheritance of mitochondria. The chain is Mitochondrial distribution and morphology protein 10 from Eremothecium gossypii (strain ATCC 10895 / CBS 109.51 / FGSC 9923 / NRRL Y-1056) (Yeast).